Reading from the N-terminus, the 189-residue chain is Lipid A acyltransferase PagP (189 aa).

Positions 1–23 (MKLKSVLYLLMLLNCLGLKSAHA) are cleaved as a signal peptide. Catalysis depends on residues His-61, Asp-104, and Ser-105.

The protein belongs to the lipid A palmitoyltransferase family. As to quaternary structure, homodimer.

It is found in the cell outer membrane. It catalyses the reaction a lipid A + a 1,2-diacyl-sn-glycero-3-phosphocholine = a hepta-acyl lipid A + a 2-acyl-sn-glycero-3-phosphocholine. The catalysed reaction is a lipid IVA + a 1,2-diacyl-sn-glycero-3-phosphocholine = a lipid IVB + a 2-acyl-sn-glycero-3-phosphocholine. The enzyme catalyses a lipid IIA + a 1,2-diacyl-sn-glycero-3-phosphocholine = a lipid IIB + a 2-acyl-sn-glycero-3-phosphocholine. In terms of biological role, transfers a fatty acid residue from the sn-1 position of a phospholipid to the N-linked hydroxyfatty acid chain on the proximal unit of lipid A or its precursors. This is Lipid A acyltransferase PagP from Erwinia amylovora (strain ATCC 49946 / CCPPB 0273 / Ea273 / 27-3).